Consider the following 241-residue polypeptide: Beta-nerve growth factor (241 aa).

The first 18 residues, 1 to 18 (MSMLFYTLITALLIGVQA), serve as a signal peptide directing secretion. Residues 19–121 (EPYTDSNLPE…SFNRTHRSKR (103 aa)) constitute a propeptide that is removed on maturation. Asparagine 69, asparagine 114, and asparagine 166 each carry an N-linked (GlcNAc...) asparagine glycan. 3 disulfide bridges follow: cysteine 136-cysteine 201, cysteine 179-cysteine 229, and cysteine 189-cysteine 231.

Belongs to the NGF-beta family. In terms of assembly, homodimer. The homodimer interacts with a single NTRK1 chain. The homodimer interacts with a single NGFR chain. The NGF dimer interacts with a single SORCS2 chain (via extracellular domain). The NGF precursor (proNGF) binds to a receptor complex formed by SORT1 and NGFR, which leads to NGF endocytosis. Both mature NGF and the immature NGF precursor (proNGF) interact with SORCS2 and with the heterodimer formed by SORCS2 and NGFR (via extracellular domains). The NGF precursor (proNGF) has much higher affinity for SORCS2 than mature NGF. The NGF precursor (proNGF) has much higher affinity for SORT1 than mature NGF. Interacts with ADAM10 in a divalent cation-dependent manner. Interacts with SORCS3.

The protein localises to the secreted. Its subcellular location is the endosome lumen. Functionally, nerve growth factor is important for the development and maintenance of the sympathetic and sensory nervous systems. Extracellular ligand for the NTRK1 and NGFR receptors, activates cellular signaling cascades through those receptor tyrosine kinase to regulate neuronal proliferation, differentiation and survival. Inhibits metalloproteinase dependent proteolysis of platelet glycoprotein VI. In Mastomys natalensis (African soft-furred rat), this protein is Beta-nerve growth factor (NGF).